We begin with the raw amino-acid sequence, 425 residues long: CinA-like protein (425 aa).

This sequence belongs to the CinA family.

This chain is CinA-like protein, found in Desulfovibrio desulfuricans (strain ATCC 27774 / DSM 6949 / MB).